The primary structure comprises 193 residues: Probable GTP-binding protein EngB (193 aa).

Residues 22–193 form the EngB-type G domain; that stretch reads QLPEFALAGR…EAWGALQKWM (172 aa). GTP is bound by residues 30-37, 57-61, 75-78, 142-145, and 174-176; these read GRSNVGKS, GKTQT, DVPG, TKAD, and FSA. The Mg(2+) site is built by Ser37 and Thr59.

This sequence belongs to the TRAFAC class TrmE-Era-EngA-EngB-Septin-like GTPase superfamily. EngB GTPase family. Mg(2+) is required as a cofactor.

Functionally, necessary for normal cell division and for the maintenance of normal septation. The chain is Probable GTP-binding protein EngB from Anoxybacillus flavithermus (strain DSM 21510 / WK1).